The sequence spans 312 residues: MNWTEVAIVANHEVSPIITNLLEDYGSNGVVIEDSEDLTHDFEDKYGEIYALNAEDYPTQGVRVKAYFNEIKYTKDFQEKLIQSLKDIESLDLDLFSFDEQTIREQDWENEWKHYFHPFRASEKFTIVPSWETYQQEDDSELCIELDPGMAFGTGDHPTTSMCLKAIEAYVKSSDSVIDVGTGSGILSIAAHLLGVKRIKALDVDEMAVRVAKENFQKNNCEYAIEAVPGNLLKEETEKFDVVIANILAHIIEEMIDDAYNTLNKDGYFITSGIIEEKHEAIVEHMKRSGFEIVSINHDNSWVCIVGQKVSD.

Thr-160, Gly-181, Asp-203, and Asn-246 together coordinate S-adenosyl-L-methionine.

This sequence belongs to the methyltransferase superfamily. PrmA family.

Its subcellular location is the cytoplasm. It catalyses the reaction L-lysyl-[protein] + 3 S-adenosyl-L-methionine = N(6),N(6),N(6)-trimethyl-L-lysyl-[protein] + 3 S-adenosyl-L-homocysteine + 3 H(+). Methylates ribosomal protein L11. This is Ribosomal protein L11 methyltransferase from Staphylococcus saprophyticus subsp. saprophyticus (strain ATCC 15305 / DSM 20229 / NCIMB 8711 / NCTC 7292 / S-41).